Here is a 320-residue protein sequence, read N- to C-terminus: tRNA dimethylallyltransferase (320 aa).

14–21 is an ATP binding site; the sequence is GPTASGKT. Residue 16-21 coordinates substrate; that stretch reads TASGKT. 2 interaction with substrate tRNA regions span residues 39–42 and 163–167; these read DSAL and QRLQR.

This sequence belongs to the IPP transferase family. As to quaternary structure, monomer. Mg(2+) serves as cofactor.

It carries out the reaction adenosine(37) in tRNA + dimethylallyl diphosphate = N(6)-dimethylallyladenosine(37) in tRNA + diphosphate. Its function is as follows. Catalyzes the transfer of a dimethylallyl group onto the adenine at position 37 in tRNAs that read codons beginning with uridine, leading to the formation of N6-(dimethylallyl)adenosine (i(6)A). The chain is tRNA dimethylallyltransferase from Thioalkalivibrio sulfidiphilus (strain HL-EbGR7).